The following is a 195-amino-acid chain: uncharacterized protein (195 aa).

Disordered regions lie at residues 1-51 and 160-195; these read MTHN…GPSY and SYSQ…KSCN. The span at 13–28 shows a compositional bias: polar residues; it reads SYQNQAPQPQYYTRQP. A compositionally biased stretch (basic residues) spans 170 to 189; the sequence is YYKKHKHHSHHRPKHVKSSR.

This is an uncharacterized protein from Acanthamoeba polyphaga mimivirus (APMV).